Reading from the N-terminus, the 769-residue chain is Endothelin-converting enzyme 1 (769 aa).

At 1–67 the chain is on the cytoplasmic side; the sequence is MRTVWSPLAA…WAARTSVEKR (67 aa). Threonine 24 is subject to Phosphothreonine. A helical; Signal-anchor for type II membrane protein transmembrane segment spans residues 68-88; that stretch reads LVVLVTLLAAGLVACLAALGI. Residues 89 to 769 lie on the Extracellular side of the membrane; the sequence is QYQTRTPPVC…MNPHHKCEVW (681 aa). A Peptidase M13 domain is found at 97–769; the sequence is VCLTEACVSV…MNPHHKCEVW (673 aa). Cystine bridges form between cysteine 98/cysteine 103, cysteine 121/cysteine 754, cysteine 129/cysteine 714, cysteine 184/cysteine 434, and cysteine 643/cysteine 766. Residues asparagine 165, asparagine 186, asparagine 209, asparagine 269, asparagine 315, asparagine 361, asparagine 382, and asparagine 538 are each glycosylated (N-linked (GlcNAc...) asparagine). Histidine 606 is a binding site for Zn(2+). Glutamate 607 is a catalytic residue. Zn(2+) is bound at residue histidine 610. 2 N-linked (GlcNAc...) asparagine glycosylation sites follow: asparagine 631 and asparagine 650. Position 666 (glutamate 666) interacts with Zn(2+). The active-site Proton donor is the aspartate 670.

It belongs to the peptidase M13 family. As to quaternary structure, homodimer; disulfide-linked. Interacts with PPP1R16B. Interacts with TSPAN8; this interaction recruits the endothelin converting enzyme ECE1 to tetraspanin-enriched microdomains and positively modulates its enzymatic activity. Zn(2+) is required as a cofactor.

The protein resides in the cell membrane. It carries out the reaction Hydrolysis of the 21-Trp-|-Val-22 bond in big endothelin to form endothelin 1.. Its activity is regulated as follows. Inhibited by phosphoramidon. Functionally, converts big endothelin-1 to endothelin-1. The sequence is that of Endothelin-converting enzyme 1 (Ece1) from Mus musculus (Mouse).